The chain runs to 244 residues: MDVLVPLLQLLVLLLTLPLHLLALLGCWQPICKTYFPYLMATLTARSYKKMESKKRELFSQIKDLKGTSNEVTLLELGCGTGANFQFYPPGCKVTCVDPNPNFEKFLTKSMAENRHLQYERFIVAYGENMKQLADSSMDVVVCTLVLCSVQSPRKVLQEVQRVLKPGGLLFFWEHVSEPQGSQALLWQRVLEPTWKHIGDGCHLTRETWKDIEKAQFSEVQLEWQPPPFKWLPVGPHIMGKAVK.

An N-terminal signal peptide occupies residues 1 to 23 (MDVLVPLLQLLVLLLTLPLHLLA).

This sequence belongs to the methyltransferase superfamily. As to expression, highly expressed in liver and kidney. No expression in testis, heart, lung, brain, spleen or cultured fibroblasts.

Its subcellular location is the endoplasmic reticulum membrane. It localises to the lipid droplet. It is found in the microsome. The protein localises to the cytoplasm. The protein resides in the cytosol. It carries out the reaction a thiol + S-adenosyl-L-methionine = a methyl thioether + S-adenosyl-L-homocysteine + H(+). Its function is as follows. Thiol S-methyltransferase that catalyzes the transfer of a methyl group from S-adenosyl-L-methionine to alkyl and phenolic thiol-containing acceptor substrates. Together with TMT1B accounts for most of S-thiol methylation activity in the endoplasmic reticulum of hepatocytes. Selectively methylates S-centered nucleophiles from metabolites such as hydrogen sulfide and dithiothreitol. This chain is Thiol S-methyltransferase TMT1B (Tmt1b), found in Rattus norvegicus (Rat).